A 261-amino-acid polypeptide reads, in one-letter code: Cytochrome c oxidase subunit 3 (261 aa).

Residues 1 to 15 (MTNQLHPFHMTNPSP) are Mitochondrial matrix-facing. Residues 16-34 (WPLTGATAALLMTSGLIMW) traverse the membrane as a helical segment. Over 35–40 (FHYNSS) the chain is Mitochondrial intermembrane. A helical membrane pass occupies residues 41–66 (QLIMLGLLIMLLTLTQWWRDIVREST). Residues 67-72 (FQGHHT) are Mitochondrial matrix-facing. A helical transmembrane segment spans residues 73 to 105 (PSVQNNLRYGMILFITSEILFFTGFFWAFYHSS). Over 106-128 (LSPTAELGNIWPPTGITPLNPFE) the chain is Mitochondrial intermembrane. The chain crosses the membrane as a helical span at residues 129–152 (VPLLNTAVLLASGVTITWAHHSLM). Residues 153 to 155 (EGN) are Mitochondrial matrix-facing. A helical transmembrane segment spans residues 156–183 (RPQTLQALTLTIILGTYFTILQAMEYFE). The Mitochondrial intermembrane portion of the chain corresponds to 184-190 (ASFTIAD). A helical transmembrane segment spans residues 191-223 (SIYGSTFFVATGFHGLHVIIGSTFLIVCLMRQL). At 224–232 (KYHFTSHHH) the chain is on the mitochondrial matrix side. A helical transmembrane segment spans residues 233–256 (FGFEAAAWYWHFVDVIWLFLYLSI). Residues 257–261 (YWWGS) are Mitochondrial intermembrane-facing.

Belongs to the cytochrome c oxidase subunit 3 family. Component of the cytochrome c oxidase (complex IV, CIV), a multisubunit enzyme composed of 14 subunits. The complex is composed of a catalytic core of 3 subunits MT-CO1, MT-CO2 and MT-CO3, encoded in the mitochondrial DNA, and 11 supernumerary subunits COX4I, COX5A, COX5B, COX6A, COX6B, COX6C, COX7A, COX7B, COX7C, COX8 and NDUFA4, which are encoded in the nuclear genome. The complex exists as a monomer or a dimer and forms supercomplexes (SCs) in the inner mitochondrial membrane with NADH-ubiquinone oxidoreductase (complex I, CI) and ubiquinol-cytochrome c oxidoreductase (cytochrome b-c1 complex, complex III, CIII), resulting in different assemblies (supercomplex SCI(1)III(2)IV(1) and megacomplex MCI(2)III(2)IV(2)).

The protein resides in the mitochondrion inner membrane. The enzyme catalyses 4 Fe(II)-[cytochrome c] + O2 + 8 H(+)(in) = 4 Fe(III)-[cytochrome c] + 2 H2O + 4 H(+)(out). Functionally, component of the cytochrome c oxidase, the last enzyme in the mitochondrial electron transport chain which drives oxidative phosphorylation. The respiratory chain contains 3 multisubunit complexes succinate dehydrogenase (complex II, CII), ubiquinol-cytochrome c oxidoreductase (cytochrome b-c1 complex, complex III, CIII) and cytochrome c oxidase (complex IV, CIV), that cooperate to transfer electrons derived from NADH and succinate to molecular oxygen, creating an electrochemical gradient over the inner membrane that drives transmembrane transport and the ATP synthase. Cytochrome c oxidase is the component of the respiratory chain that catalyzes the reduction of oxygen to water. Electrons originating from reduced cytochrome c in the intermembrane space (IMS) are transferred via the dinuclear copper A center (CU(A)) of subunit 2 and heme A of subunit 1 to the active site in subunit 1, a binuclear center (BNC) formed by heme A3 and copper B (CU(B)). The BNC reduces molecular oxygen to 2 water molecules using 4 electrons from cytochrome c in the IMS and 4 protons from the mitochondrial matrix. This Pelomedusa subrufa (African side-necked turtle) protein is Cytochrome c oxidase subunit 3 (MT-CO3).